The following is a 275-amino-acid chain: MALVKLKPTSAGRRGMVKVVNPDLYKGRPHDALTEKKTSKAGRNNSGRVTVRHQGGGHKMHYRVIDFRRNKDGIAAKVERIEYDPNRSANIALLCYADGERRYIIAPRGVEVGQQLMSGAEAPIKAGNALPIRNIPVGSTIHCVEMMPGKGAQIARAAGTSVQLLAREGAYAQLRLRSGEIRRVHVECRATIGEVGNEEHSLRKIGKAGANRWRGIRPTVRGVAMNPVDHPHGGGEGRTGEGRVPVSPWGTPAKGYRTRRNKRTDNMIVQRRHKR.

Disordered stretches follow at residues 24 to 54 (LYKGRPHDALTEKKTSKAGRNNSGRVTVRHQ) and 223 to 275 (VAMN…RHKR). Basic and acidic residues-rich tracts occupy residues 25-38 (YKGRPHDALTEKKT) and 229-241 (DHPHGGGEGRTGE).

It belongs to the universal ribosomal protein uL2 family. As to quaternary structure, part of the 50S ribosomal subunit. Forms a bridge to the 30S subunit in the 70S ribosome.

Its function is as follows. One of the primary rRNA binding proteins. Required for association of the 30S and 50S subunits to form the 70S ribosome, for tRNA binding and peptide bond formation. It has been suggested to have peptidyltransferase activity; this is somewhat controversial. Makes several contacts with the 16S rRNA in the 70S ribosome. This Azoarcus sp. (strain BH72) protein is Large ribosomal subunit protein uL2.